The sequence spans 207 residues: ATP-dependent Clp protease proteolytic subunit (207 aa).

The Nucleophile role is filled by Ser111. The active site involves His136.

The protein belongs to the peptidase S14 family. In terms of assembly, fourteen ClpP subunits assemble into 2 heptameric rings which stack back to back to give a disk-like structure with a central cavity, resembling the structure of eukaryotic proteasomes.

Its subcellular location is the cytoplasm. It carries out the reaction Hydrolysis of proteins to small peptides in the presence of ATP and magnesium. alpha-casein is the usual test substrate. In the absence of ATP, only oligopeptides shorter than five residues are hydrolyzed (such as succinyl-Leu-Tyr-|-NHMec, and Leu-Tyr-Leu-|-Tyr-Trp, in which cleavage of the -Tyr-|-Leu- and -Tyr-|-Trp bonds also occurs).. Cleaves peptides in various proteins in a process that requires ATP hydrolysis. Has a chymotrypsin-like activity. Plays a major role in the degradation of misfolded proteins. This chain is ATP-dependent Clp protease proteolytic subunit, found in Burkholderia mallei (strain ATCC 23344).